Consider the following 400-residue polypeptide: Enoyl-[acyl-carrier-protein] reductase [NADH] 1 (400 aa).

Residues 48-53 (GASSGY), 74-75 (FE), 111-112 (DA), and 139-140 (LA) each bind NAD(+). Position 225 (Tyr-225) interacts with substrate. The active-site Proton donor is Tyr-235. Residues Lys-244 and 273 to 275 (VVT) contribute to the NAD(+) site.

This sequence belongs to the TER reductase family. In terms of assembly, monomer.

The enzyme catalyses a 2,3-saturated acyl-[ACP] + NAD(+) = a (2E)-enoyl-[ACP] + NADH + H(+). The protein operates within lipid metabolism; fatty acid biosynthesis. Functionally, involved in the final reduction of the elongation cycle of fatty acid synthesis (FAS II). Catalyzes the reduction of a carbon-carbon double bond in an enoyl moiety that is covalently linked to an acyl carrier protein (ACP). The protein is Enoyl-[acyl-carrier-protein] reductase [NADH] 1 of Vibrio vulnificus (strain YJ016).